The primary structure comprises 286 residues: UPF0761 membrane protein KPN78578_41360 (286 aa).

Transmembrane regions (helical) follow at residues 44 to 64 (LLSL…FPMF), 74 to 94 (FIFA…IEQF), 104 to 124 (VGAF…DSAL), 140 to 160 (FAVY…SLAI), 183 to 203 (LFPL…VPTT), 210 to 230 (AVIG…AFAL), and 244 to 264 (VISV…IVLL).

It belongs to the UPF0761 family.

The protein localises to the cell inner membrane. This Klebsiella pneumoniae subsp. pneumoniae (strain ATCC 700721 / MGH 78578) protein is UPF0761 membrane protein KPN78578_41360.